The primary structure comprises 540 residues: MIWHVQNENFILDSTRIFMKAFHLLLFDGSLIFPECILIFGLILLLMIDSSSDQKDIPWLYFIPSTSLVMSITALLFRWREEPMISFSGNFQTNNFNEIFQFLILLCSTLCIPLSVEYIECTEMAITEFLLFVLTATLGGMFLCGANDFITIFVAPECFSLCSYLLSGYTKKDVRSNEATMKYLLMGGASSSILVHGFSWLYGSSGGEIELQEIVNGLINTQMYNSPGISIALIFITVGIGFKLSPAPSHQWTPDVYEGVRFVREIPTSLSISEMFGFFKTPWTCRREISPTPVVAFLSVTSKVAASASATRIFDIPFYFSSNGWHLLLEILAILSMILGNLIAITQTSMKRMLAYSSIGQIGYVIIGIIVGDSNDGYASMITYMLFYISMNLGTFACIVLFGLRTGTDNIRDYAGLYTKDPFLALSLALCLLSLGGLPPLAGFFGKLYLFWCGWQAGLYFLVLIGLLTSVVSIYYYLKIIKLLMTGRNQEITPHVRNYRRSPLRSNNSIELSMIVCVIASTIPGISMNPIIAIAQDSLF.

13 helical membrane passes run 24–44 (LLLF…GLIL), 57–77 (IPWL…ALLF), 99–119 (IFQF…VEYI), 124–144 (MAIT…MFLC), 149–169 (FITI…LSGY), 183–203 (YLLM…WLYG), 227–247 (PGIS…LSPA), 325–345 (WHLL…LIAI), 353–373 (MLAY…IVGD), 384–404 (YMLF…LFGL), 425–445 (ALSL…AGFF), 448–468 (LYLF…IGLL), and 514–534 (MIVC…IIAI).

It belongs to the complex I subunit 2 family. In terms of assembly, NDH is composed of at least 16 different subunits, 5 of which are encoded in the nucleus.

It localises to the plastid. It is found in the chloroplast thylakoid membrane. The enzyme catalyses a plastoquinone + NADH + (n+1) H(+)(in) = a plastoquinol + NAD(+) + n H(+)(out). It catalyses the reaction a plastoquinone + NADPH + (n+1) H(+)(in) = a plastoquinol + NADP(+) + n H(+)(out). Functionally, NDH shuttles electrons from NAD(P)H:plastoquinone, via FMN and iron-sulfur (Fe-S) centers, to quinones in the photosynthetic chain and possibly in a chloroplast respiratory chain. The immediate electron acceptor for the enzyme in this species is believed to be plastoquinone. Couples the redox reaction to proton translocation, and thus conserves the redox energy in a proton gradient. The chain is NAD(P)H-quinone oxidoreductase subunit 2 B, chloroplastic from Coffea arabica (Arabian coffee).